The sequence spans 172 residues: Transcription factor E (172 aa).

One can recognise an HTH TFE/IIEalpha-type domain in the interval 8 to 90 (DDPVVQKYLH…LWTFQYENVP (83 aa)).

Belongs to the TFE family. In terms of assembly, monomer. Interaction with RNA polymerase subunits RpoF and RpoE is necessary for Tfe stimulatory transcription activity. Able to interact with Tbp and RNA polymerase in the absence of DNA promoter. Interacts both with the preinitiation and elongation complexes.

Transcription factor that plays a role in the activation of archaeal genes transcribed by RNA polymerase. Facilitates transcription initiation by enhancing TATA-box recognition by TATA-box-binding protein (Tbp), and transcription factor B (Tfb) and RNA polymerase recruitment. Not absolutely required for transcription in vitro, but particularly important in cases where Tbp or Tfb function is not optimal. It dynamically alters the nucleic acid-binding properties of RNA polymerases by stabilizing the initiation complex and destabilizing elongation complexes. Seems to translocate with the RNA polymerase following initiation and acts by binding to the non template strand of the transcription bubble in elongation complexes. This is Transcription factor E from Halobacterium salinarum (strain ATCC 700922 / JCM 11081 / NRC-1) (Halobacterium halobium).